Consider the following 463-residue polypeptide: Dihydrolipoyllysine-residue succinyltransferase component of 2-oxoglutarate dehydrogenase complex, mitochondrial (463 aa).

The region spanning 73–148 (STSIEVPPMA…TVGEELAQVE (76 aa)) is the Lipoyl-binding domain. Lys-114 bears the N6-lipoyllysine mark. Positions 144 to 237 (LAQVEPGEAP…FTPFPRTETR (94 aa)) are disordered. Residues 148-157 (EPGEAPAEGS) are compositionally biased toward low complexity. Over residues 184 to 212 (TASKKEAAPKKEAAPKKEVTEPKKADQPK) the composition is skewed to basic and acidic residues. 3 repeat units span residues 185–190 (ASKKEA), 191–196 (APKKEA), and 197–202 (APKKEV). Positions 185 to 209 (ASKKEAAPKKEAAPKKEVTEPKKAD) are 4 X 6 AA approximate tandem repeats of A-[SP]-K-K-E-[AV]. Residues 204-209 (EPKKAD) form a 4; approximate repeat. Thr-340 carries the phosphothreonine modification. Active-site residues include His-435 and Asp-439.

The protein belongs to the 2-oxoacid dehydrogenase family. As to quaternary structure, component of the 2-oxoglutarate dehydrogenase complex (OGDC), also called alpha-ketoglutarate dehydrogenase (KGDH) complex. The copmplex is composed of the catalytic subunits OGDH (2-oxoglutarate dehydrogenase KGD1; also called E1 subunit), DLST (dihydrolipoamide succinyltransferase KGD2; also called E2 subunit) and DLD (dihydrolipoamide dehydrogenase LPD1; also called E3 subunit), and the assembly factor KGD4. Requires (R)-lipoate as cofactor.

It localises to the mitochondrion. It catalyses the reaction N(6)-[(R)-dihydrolipoyl]-L-lysyl-[protein] + succinyl-CoA = N(6)-[(R)-S(8)-succinyldihydrolipoyl]-L-lysyl-[protein] + CoA. It functions in the pathway amino-acid degradation; L-lysine degradation via saccharopine pathway; glutaryl-CoA from L-lysine: step 6/6. In terms of biological role, the 2-oxoglutarate dehydrogenase complex catalyzes the overall conversion of 2-oxoglutarate to succinyl-CoA and CO(2). It contains multiple copies of three enzymatic components: 2-oxoglutarate dehydrogenase (E1), dihydrolipoamide succinyltransferase (E2) and lipoamide dehydrogenase (E3). In Saccharomyces cerevisiae (strain ATCC 204508 / S288c) (Baker's yeast), this protein is Dihydrolipoyllysine-residue succinyltransferase component of 2-oxoglutarate dehydrogenase complex, mitochondrial (KGD2).